Reading from the N-terminus, the 453-residue chain is Kynureninase (453 aa).

Pyridoxal 5'-phosphate is bound by residues Leu-114, Thr-115, 142 to 145 (FPSD), Asp-232, His-235, and Tyr-257. Lys-258 carries the post-translational modification N6-(pyridoxal phosphate)lysine. Trp-286 lines the pyridoxal 5'-phosphate pocket.

This sequence belongs to the kynureninase family. Homodimer. Pyridoxal 5'-phosphate serves as cofactor.

The protein resides in the cytoplasm. The catalysed reaction is L-kynurenine + H2O = anthranilate + L-alanine + H(+). The enzyme catalyses 3-hydroxy-L-kynurenine + H2O = 3-hydroxyanthranilate + L-alanine + H(+). It participates in amino-acid degradation; L-kynurenine degradation; L-alanine and anthranilate from L-kynurenine: step 1/1. Its pathway is cofactor biosynthesis; NAD(+) biosynthesis; quinolinate from L-kynurenine: step 2/3. Catalyzes the cleavage of L-kynurenine (L-Kyn) and L-3-hydroxykynurenine (L-3OHKyn) into anthranilic acid (AA) and 3-hydroxyanthranilic acid (3-OHAA), respectively. The polypeptide is Kynureninase (Cryptococcus neoformans var. neoformans serotype D (strain JEC21 / ATCC MYA-565) (Filobasidiella neoformans)).